A 556-amino-acid chain; its full sequence is Trigger factor (556 aa).

Residues 169–255 (GDVVVIDFAA…LREIKAKELP (87 aa)) form the PPIase FKBP-type domain. The span at 438–452 (VDSEGNPTQAPTSLA) shows a compositional bias: polar residues. The disordered stretch occupies residues 438 to 556 (VDSEGNPTQA…KPSKKDKKGK (119 aa)). A compositionally biased stretch (acidic residues) spans 461-472 (PEAEFEADEPEA). 2 stretches are compositionally biased toward low complexity: residues 486–503 (ETAT…AEAE) and 511–526 (EASP…AEAT).

Belongs to the FKBP-type PPIase family. Tig subfamily.

The protein resides in the cytoplasm. The catalysed reaction is [protein]-peptidylproline (omega=180) = [protein]-peptidylproline (omega=0). Involved in protein export. Acts as a chaperone by maintaining the newly synthesized protein in an open conformation. Functions as a peptidyl-prolyl cis-trans isomerase. This Synechococcus sp. (strain JA-2-3B'a(2-13)) (Cyanobacteria bacterium Yellowstone B-Prime) protein is Trigger factor.